The following is a 111-amino-acid chain: Protein YibV (111 aa).

This is Protein YibV (yibV) from Escherichia coli O157:H7.